Reading from the N-terminus, the 352-residue chain is NAD-dependent protein deacetylase sirtuin-2 (352 aa).

A Phosphoserine modification is found at serine 16. Residues arginine 20 to lysine 301 form the Deacetylase sirtuin-type domain. NAD(+) is bound by residues alanine 48–threonine 52 and aspartate 58–arginine 60. At serine 63 the chain carries Phosphoserine. Glutamine 130–aspartate 133 contacts NAD(+). Catalysis depends on histidine 150, which acts as the Proton acceptor. Zn(2+) is bound by residues cysteine 158 and cysteine 163. Position 170 is a phosphoserine (serine 170). Residues cysteine 184 and cysteine 187 each coordinate Zn(2+). NAD(+) contacts are provided by residues threonine 225 to serine 226, asparagine 249 to glutamate 251, and cysteine 287. A disordered region spans residues serine 314–glutamine 352. Residues proline 324 to lysine 333 are compositionally biased toward low complexity. Residues serine 331 and serine 335 each carry the phosphoserine modification. A compositionally biased stretch (basic and acidic residues) spans alanine 339–glutamine 352.

The protein belongs to the sirtuin family. Class I subfamily. Interacts with CDC20, FOXO3 and FZR1. Associates with microtubules in primary cortical mature neurons. Homotrimer. Interacts (via both phosphorylated, unphosphorylated, active or inactive forms) with HDAC6; the interaction is necessary for the complex to interact with alpha-tubulin, suggesting that these proteins belong to a large complex that deacetylates the cytoskeleton. Interacts with FOXO1; the interaction is disrupted upon serum-starvation or oxidative stress, leading to increased level of acetylated FOXO1 and induction of autophagy. Interacts with RELA; the interaction occurs in the cytoplasm and is increased in a TNF-alpha-dependent manner. Interacts with HOXA10; the interaction is direct. Interacts with YWHAB and YWHAG; the interactions occur in a AKT-dependent manner and increase SIRT2-dependent TP53 deacetylation. Interacts with MAPK1/ERK2 and MAPK3/ERK1; the interactions increase SIRT2 stability and deacetylation activity. Interacts (phosphorylated form) with KMT5A isoform 2; the interaction is direct, stimulates KMT5A-mediated methyltransferase activity on histone at 'Lys-20' (H4K20me1) and is increased in a H(2)O(2)-induced oxidative stress-dependent manner. Interacts with G6PD; the interaction is enhanced by H(2)O(2) treatment. Interacts with a G1/S-specific cyclin E-CDK2 complex. Interacts with AURKA, CDK5R1 (p35 form) and CDK5 and HIF1A. Interacts with the tRNA ligase SARS1; recruited to the VEGFA promoter via interaction with SARS1. Interacts with BEX4; negatively regulates alpha-tubulin deacetylation by SIRT2. Interacts with MORN3; the interaction enhances the ubiquitination of p53/TP53. It depends on Zn(2+) as a cofactor. In terms of processing, phosphorylated at phosphoserine and phosphothreonine. Phosphorylated at Ser-331 by a mitotic kinase CDK1/cyclin B at the G2/M transition; phosphorylation regulates the delay in cell-cycle progression. Phosphorylated at Ser-331 by a mitotic kinase G1/S-specific cyclin E/Cdk2 complex; phosphorylation inactivates SIRT2-mediated alpha-tubulin deacetylation and thereby negatively regulates cell adhesion, cell migration and neurite outgrowth during neuronal differentiation. Phosphorylated by cyclin A/Cdk2 and p35-Cdk5 complexes and to a lesser extent by the cyclin D3/Cdk4 and cyclin B/Cdk1, in vitro. Dephosphorylated at Ser-331 by CDC14A and CDC14B around early anaphase. Acetylated by EP300; acetylation leads both to the decreased of SIRT2-mediated alpha-tubulin deacetylase activity and SIRT2-mediated down-regulation of TP53 transcriptional activity. Post-translationally, ubiquitinated.

Its subcellular location is the nucleus. It is found in the cytoplasm. The protein localises to the perinuclear region. It localises to the cytoskeleton. The protein resides in the microtubule organizing center. Its subcellular location is the centrosome. It is found in the centriole. The protein localises to the spindle. It localises to the midbody. The protein resides in the chromosome. Its subcellular location is the perikaryon. It is found in the cell projection. The protein localises to the growth cone. It localises to the myelin membrane. It carries out the reaction N(6)-acetyl-L-lysyl-[protein] + NAD(+) + H2O = 2''-O-acetyl-ADP-D-ribose + nicotinamide + L-lysyl-[protein]. It catalyses the reaction N(6)-tetradecanoyl-L-lysyl-[protein] + NAD(+) + H2O = 2''-O-tetradecanoyl-ADP-D-ribose + nicotinamide + L-lysyl-[protein]. The catalysed reaction is N(6)-hexadecanoyl-L-lysyl-[protein] + NAD(+) + H2O = 2''-O-hexadecanoyl-ADP-D-ribose + nicotinamide + L-lysyl-[protein]. Its activity is regulated as follows. Inhibited by Sirtinol, A3 and M15 small molecules. Inhibited by nicotinamide. Inhibited by a macrocyclic peptide inhibitor S2iL5. Inhibited by EP300-induced acetylation. Its function is as follows. NAD-dependent protein deacetylase, which deacetylates internal lysines on histone and alpha-tubulin as well as many other proteins such as key transcription factors. Participates in the modulation of multiple and diverse biological processes such as cell cycle control, genomic integrity, microtubule dynamics, cell differentiation, metabolic networks, and autophagy. Plays a major role in the control of cell cycle progression and genomic stability. Functions in the antephase checkpoint preventing precocious mitotic entry in response to microtubule stress agents, and hence allowing proper inheritance of chromosomes. Positively regulates the anaphase promoting complex/cyclosome (APC/C) ubiquitin ligase complex activity by deacetylating CDC20 and FZR1, then allowing progression through mitosis. Associates both with chromatin at transcriptional start sites (TSSs) and enhancers of active genes. Plays a role in cell cycle and chromatin compaction through epigenetic modulation of the regulation of histone H4 'Lys-20' methylation (H4K20me1) during early mitosis. Specifically deacetylates histone H4 at 'Lys-16' (H4K16ac) between the G2/M transition and metaphase enabling H4K20me1 deposition by KMT5A leading to ulterior levels of H4K20me2 and H4K20me3 deposition throughout cell cycle, and mitotic S-phase progression. Deacetylates KMT5A modulating KMT5A chromatin localization during the mitotic stress response. Also deacetylates histone H3 at 'Lys-57' (H3K56ac) during the mitotic G2/M transition. During oocyte meiosis progression, may deacetylate histone H4 at 'Lys-16' (H4K16ac) and alpha-tubulin, regulating spindle assembly and chromosome alignment by influencing microtubule dynamics and kinetochore function. Deacetylates histone H4 at 'Lys-16' (H4K16ac) at the VEGFA promoter and thereby contributes to regulate expression of VEGFA, a key regulator of angiogenesis. Deacetylates alpha-tubulin at 'Lys-40' and hence controls neuronal motility, oligodendroglial cell arbor projection processes and proliferation of non-neuronal cells. Phosphorylation at Ser-368 by a G1/S-specific cyclin E-CDK2 complex inactivates SIRT2-mediated alpha-tubulin deacetylation, negatively regulating cell adhesion, cell migration and neurite outgrowth during neuronal differentiation. Deacetylates PARD3 and participates in the regulation of Schwann cell peripheral myelination formation during early postnatal development and during postinjury remyelination. Involved in several cellular metabolic pathways. Plays a role in the regulation of blood glucose homeostasis by deacetylating and stabilizing phosphoenolpyruvate carboxykinase PCK1 activity in response to low nutrient availability. Acts as a key regulator in the pentose phosphate pathway (PPP) by deacetylating and activating the glucose-6-phosphate G6PD enzyme, and therefore, stimulates the production of cytosolic NADPH to counteract oxidative damage. Maintains energy homeostasis in response to nutrient deprivation as well as energy expenditure by inhibiting adipogenesis and promoting lipolysis. Attenuates adipocyte differentiation by deacetylating and promoting FOXO1 interaction to PPARG and subsequent repression of PPARG-dependent transcriptional activity. Plays a role in the regulation of lysosome-mediated degradation of protein aggregates by autophagy in neuronal cells. Deacetylates FOXO1 in response to oxidative stress or serum deprivation, thereby negatively regulating FOXO1-mediated autophagy. Deacetylates a broad range of transcription factors and co-regulators regulating target gene expression. Deacetylates transcriptional factor FOXO3 stimulating the ubiquitin ligase SCF(SKP2)-mediated FOXO3 ubiquitination and degradation. Deacetylates HIF1A and therefore promotes HIF1A degradation and inhibition of HIF1A transcriptional activity in tumor cells in response to hypoxia. Deacetylates RELA in the cytoplasm inhibiting NF-kappaB-dependent transcription activation upon TNF-alpha stimulation. Inhibits transcriptional activation by deacetylating p53/TP53 and EP300. Also deacetylates EIF5A. Functions as a negative regulator on oxidative stress-tolerance in response to anoxia-reoxygenation conditions. Plays a role as tumor suppressor. In addition to protein deacetylase activity, also has activity toward long-chain fatty acyl groups and mediates protein-lysine demyristoylation and depalmitoylation of target proteins, such as ARF6 and KRAS, thereby regulating their association with membranes. The sequence is that of NAD-dependent protein deacetylase sirtuin-2 (SIRT2) from Pongo abelii (Sumatran orangutan).